Consider the following 883-residue polypeptide: Alanine--tRNA ligase (883 aa).

Zn(2+) contacts are provided by His563, His567, Cys677, and His681.

The protein belongs to the class-II aminoacyl-tRNA synthetase family. The cofactor is Zn(2+).

Its subcellular location is the cytoplasm. The enzyme catalyses tRNA(Ala) + L-alanine + ATP = L-alanyl-tRNA(Ala) + AMP + diphosphate. In terms of biological role, catalyzes the attachment of alanine to tRNA(Ala) in a two-step reaction: alanine is first activated by ATP to form Ala-AMP and then transferred to the acceptor end of tRNA(Ala). Also edits incorrectly charged Ser-tRNA(Ala) and Gly-tRNA(Ala) via its editing domain. The chain is Alanine--tRNA ligase from Cereibacter sphaeroides (strain ATCC 17025 / ATH 2.4.3) (Rhodobacter sphaeroides).